Reading from the N-terminus, the 124-residue chain is ATP synthase epsilon chain (124 aa).

The segment covering leucine 99–leucine 118 has biased composition (basic and acidic residues). Residues leucine 99–arginine 124 are disordered.

Belongs to the ATPase epsilon chain family. In terms of assembly, F-type ATPases have 2 components, CF(1) - the catalytic core - and CF(0) - the membrane proton channel. CF(1) has five subunits: alpha(3), beta(3), gamma(1), delta(1), epsilon(1). CF(0) has three main subunits: a, b and c.

Its subcellular location is the cell membrane. Functionally, produces ATP from ADP in the presence of a proton gradient across the membrane. This chain is ATP synthase epsilon chain (atpC), found in Streptomyces coelicolor (strain ATCC BAA-471 / A3(2) / M145).